The chain runs to 443 residues: Xaa-Pro dipeptidase (443 aa).

Residues aspartate 246, aspartate 257, histidine 339, glutamate 384, and glutamate 423 each coordinate Mn(2+).

It belongs to the peptidase M24B family. Bacterial-type prolidase subfamily. The cofactor is Mn(2+).

It carries out the reaction Xaa-L-Pro dipeptide + H2O = an L-alpha-amino acid + L-proline. In terms of biological role, splits dipeptides with a prolyl residue in the C-terminal position. The polypeptide is Xaa-Pro dipeptidase (Yersinia pestis bv. Antiqua (strain Nepal516)).